A 503-amino-acid polypeptide reads, in one-letter code: Envelope glycoprotein p57 (503 aa).

A signal peptide spans 1 to 22; that stretch reads MQLSMSFLIGFGTLVLALSART. Topologically, residues 23 to 467 are extracellular; that stretch reads FDLQGLSCNT…FLNPLGWLRD (445 aa). N-linked (GlcNAc...) asparagine; by host glycans are attached at residues Asn63, Asn109, Asn139, Asn192, Asn196, Asn202, Asn221, Asn230, and Asn235. The segment at 274–315 is fusion peptide; it reads ILQSLLLGVFGTGIASASQFLRGWLNHPDIIGYIVNGVGVVW. N-linked (GlcNAc...) asparagine; by host glycans are attached at residues Asn321, Asn328, Asn388, and Asn438. Residues 468–488 traverse the membrane as a helical segment; that stretch reads LLAWAAWLGGVLYLISLCVSL. Residues 489-503 lie on the Cytoplasmic side of the membrane; it reads PASFARRRRLGRWQE.

Glycosated; Stabilizes it. In terms of processing, a portion of p57 is cleaved into p27 and p29. p27 and p29 are called gp43 when glycosylated, as they seem to have the same molecular weight.

The protein resides in the host endoplasmic reticulum membrane. Its subcellular location is the virion. It localises to the host cell membrane. In terms of biological role, unprocessed envelope protein p57 is thought to be involved in attachment of the virus to its cell surface receptor. This attachment induces virion internalization predominantly through clathrin-dependent endocytosis. Its function is as follows. Envelope protein p27 and p29 presumably linked by disulfide bond are the viral type II fusion protein, involved in pH-dependent fusion within early endosomes after internalization of the virion by endocytosis. This Borna disease virus 1 (BoDV-1) protein is Envelope glycoprotein p57 (G).